We begin with the raw amino-acid sequence, 945 residues long: Valine--tRNA ligase (945 aa).

The 'HIGH' region motif lies at Pro-42–His-52. Residues Lys-552–Ser-556 carry the 'KMSKS' region motif. Lys-555 contacts ATP. The stretch at Asp-879 to Asp-945 forms a coiled coil.

Belongs to the class-I aminoacyl-tRNA synthetase family. ValS type 1 subfamily. As to quaternary structure, monomer.

Its subcellular location is the cytoplasm. The enzyme catalyses tRNA(Val) + L-valine + ATP = L-valyl-tRNA(Val) + AMP + diphosphate. Functionally, catalyzes the attachment of valine to tRNA(Val). As ValRS can inadvertently accommodate and process structurally similar amino acids such as threonine, to avoid such errors, it has a 'posttransfer' editing activity that hydrolyzes mischarged Thr-tRNA(Val) in a tRNA-dependent manner. The polypeptide is Valine--tRNA ligase (Neisseria meningitidis serogroup B (strain ATCC BAA-335 / MC58)).